We begin with the raw amino-acid sequence, 691 residues long: Elongation factor G (691 aa).

In terms of domain architecture, tr-type G spans Glu-8–Val-282. Residues Ala-17–Thr-24, Asp-81–His-85, and Asn-135–Asp-138 each bind GTP.

This sequence belongs to the TRAFAC class translation factor GTPase superfamily. Classic translation factor GTPase family. EF-G/EF-2 subfamily.

It localises to the cytoplasm. Catalyzes the GTP-dependent ribosomal translocation step during translation elongation. During this step, the ribosome changes from the pre-translocational (PRE) to the post-translocational (POST) state as the newly formed A-site-bound peptidyl-tRNA and P-site-bound deacylated tRNA move to the P and E sites, respectively. Catalyzes the coordinated movement of the two tRNA molecules, the mRNA and conformational changes in the ribosome. The chain is Elongation factor G from Prochlorococcus marinus (strain MIT 9303).